The following is a 572-amino-acid chain: [Pyruvate dehydrogenase [acetyl-transferring]]-phosphatase 1, mitochondrial (572 aa).

The disordered stretch occupies residues 95-122; it reads NTSGNINMPSPNPKGTETQKSQRSQNDQ. A PPM-type phosphatase domain is found at 153–543; it reads RYDVAQLPSN…DDLTVTVAFF (391 aa). Residues D197, G198, D424, and D480 each contribute to the Mn(2+) site. Positions 470-480 are enriched in basic and acidic residues; sequence EAQRPAFRYKD. The interval 470-492 is disordered; the sequence is EAQRPAFRYKDNNSSSPSGSNPE. Low complexity predominate over residues 481-491; the sequence is NNSSSPSGSNP.

The protein belongs to the PP2C family. Mg(2+) is required as a cofactor. Requires Mn(2+) as cofactor. Processed by mitochondrial inner membrane protease (IMP) complex and released to the intermembrane space.

Its subcellular location is the mitochondrion intermembrane space. It carries out the reaction O-phospho-L-seryl-[pyruvate dehydrogenase E1 alpha subunit] + H2O = L-seryl-[pyruvate dehydrogenase E1 alpha subunit] + phosphate. Functionally, catalyzes the dephosphorylation and concomitant reactivation of the E1 alpha subunit (PDA1) of the pyruvate dehydrogenase complex. In Saccharomyces cerevisiae (strain ATCC 204508 / S288c) (Baker's yeast), this protein is [Pyruvate dehydrogenase [acetyl-transferring]]-phosphatase 1, mitochondrial (PTC5).